Consider the following 762-residue polypeptide: MDVSALLTSAGINIAICVVLVSLYSILRKQPANYCVYFGRLLSDGRVKRHDPRWYERFAPSPSWLVKAWETTEEEMLAAAGLDAVVFIRMVICSIRIFSIVAVVCLAFVLPVNYYGQKMEHKEVHLESLGVFTIENLNPRSRWLWVHCLSLYIISSAACALLYFEYKNIAKKRLAHISGSASKPSHFTVLIRAIPQSPDQSYSETVSKYFTNYYAPSYVSHLMVYRDGFIHRLMNETERMCQAIKHVSPDLSCNPSLKSCVLCGPAATNSFQIISNETDSVKGLELGELTLTTTEEERPVAFVFFKSRYDALVVSEVLQTPNPMLWVADLAPEPHDVHWRNLRIPYRQLWMRRIATLVGAIAFMFVFLFPVTFVQGLTQLPTLSKNFPFLKDLLNRRFMEQVITGYLPSVILVLFFYTVPPLMMYFSTLEGCVSRSQRKKSACLKILYFTIWNVFFVNILSGSVIRQFTVLNSVRDVPAQLAKLVPAQAGFFMTYCFTSGWAGLACEIMQPVGLIWNLIAKVIVKNKEESYETLRFPYHTEIPRLLLFGLLGFTNSVIAPLILPFLLIYFFFAYLIYKNQIINVYITKYESGGQYWPVFHNTTIFSLILSQVIALGFFGLKLSTVASGFTIPLILLTLLFSEYCRQRFAPIFQKYPAEILIAMDRADEMTGKMEEIHNNLKVAYSQIPTCSEESSKAGCTSPCSDQELPDSEELKPEKENLKADYIWEFQRSKSGLDLEVKSCPSASPIRNSPGFAEIYKRT.

Transmembrane regions (helical) follow at residues 3 to 23 (VSALLTSAGINIAICVVLVSL), 90 to 110 (MVICSIRIFSIVAVVCLAFVL), 144 to 164 (LWVHCLSLYIISSAACALLYF), 354 to 374 (IATLVGAIAFMFVFLFPVTFV), 402 to 422 (VITGYLPSVILVLFFYTVPPL), 445 to 465 (KILYFTIWNVFFVNILSGSVI), 500 to 520 (GWAGLACEIMQPVGLIWNLIA), 557 to 577 (VIAPLILPFLLIYFFFAYLIY), 594 to 614 (QYWPVFHNTTIFSLILSQVIA), and 615 to 635 (LGFFGLKLSTVASGFTIPLIL).

This sequence belongs to the CSC1 (TC 1.A.17) family.

It localises to the membrane. Acts as an osmosensitive calcium-permeable cation channel. The sequence is that of Hyperosmolality-gated Ca2+ permeable channel 2.2 from Arabidopsis thaliana (Mouse-ear cress).